The chain runs to 539 residues: Squalene monooxygenase SE1 (539 aa).

2 helical membrane passes run 22 to 42 (LLIDQYFLGWIFAFLFGFLLL) and 71 to 91 (IAGSTDVIIVGAGVAGSALAY). FAD-binding positions include 84–85 (VA), 104–105 (ER), Arg-112, Arg-183, Val-199, Asp-361, and Met-374. Residues 472 to 492 (LFLHFFAVAIYGVGRLLIPFP) form a helical membrane-spanning segment.

It belongs to the squalene monooxygenase family. Requires FAD as cofactor. Mostly expressed in flower buds and leaves, and, to a lower extent, at high levels thought, in roots and petioles. In petioles, preferentially observed in vascular bundle tissue (phloem cells and parenchymatous cells near xylem) and resin ducts.

The protein resides in the microsome membrane. It localises to the endoplasmic reticulum membrane. It catalyses the reaction squalene + reduced [NADPH--hemoprotein reductase] + O2 = (S)-2,3-epoxysqualene + oxidized [NADPH--hemoprotein reductase] + H2O + H(+). Its pathway is terpene metabolism; lanosterol biosynthesis; lanosterol from farnesyl diphosphate: step 2/3. In terms of biological role, component of the triterpene saponins (e.g. ginsenosides or panaxosides) and phytosterols biosynthetic pathways. Catalyzes the first oxygenation step in sterol biosynthesis and is suggested to be one of the rate-limiting enzymes in this pathway. The sequence is that of Squalene monooxygenase SE1 from Panax ginseng (Korean ginseng).